Reading from the N-terminus, the 149-residue chain is uncharacterized protein (149 aa).

This is an uncharacterized protein from Homo sapiens (Human).